Consider the following 777-residue polypeptide: Double zinc ribbon and ankyrin repeat-containing protein 1 (777 aa).

Residues 161-176 (QVGERTDPKTLKDLRF) show a composition bias toward basic and acidic residues. Positions 161–202 (QVGERTDPKTLKDLRFSESPLEIPAHSGGSGSRPPTRQSQSP) are disordered. Residues 193-202 (RPPTRQSQSP) show a composition bias toward polar residues. Ser-201 is modified (phosphoserine). DZANK-type zinc fingers lie at residues 230–289 (CAHC…CVVC) and 358–406 (CSRC…GSCG). 2 ANK repeats span residues 442-473 (NIPL…LLAK) and 477-506 (EIAS…GYWR).

In terms of assembly, interacts with NINL. Associates with DYNC1H1 and multiple dynein intermediate and light chains as well as actin-binding proteins.

It is found in the cytoplasm. Its subcellular location is the cytoskeleton. It localises to the microtubule organizing center. The protein resides in the centrosome. The protein localises to the cilium basal body. In terms of biological role, involved in vesicle transport in photoreceptor cells. The sequence is that of Double zinc ribbon and ankyrin repeat-containing protein 1 (DZANK1) from Macaca fascicularis (Crab-eating macaque).